Consider the following 139-residue polypeptide: Nucleoside diphosphate kinase (139 aa).

Positions 11, 59, 87, 93, 104, and 114 each coordinate ATP. H117 (pros-phosphohistidine intermediate) is an active-site residue.

It belongs to the NDK family. As to quaternary structure, homotetramer. Mg(2+) serves as cofactor.

It is found in the cytoplasm. The enzyme catalyses a 2'-deoxyribonucleoside 5'-diphosphate + ATP = a 2'-deoxyribonucleoside 5'-triphosphate + ADP. The catalysed reaction is a ribonucleoside 5'-diphosphate + ATP = a ribonucleoside 5'-triphosphate + ADP. Functionally, major role in the synthesis of nucleoside triphosphates other than ATP. The ATP gamma phosphate is transferred to the NDP beta phosphate via a ping-pong mechanism, using a phosphorylated active-site intermediate. The polypeptide is Nucleoside diphosphate kinase (Wolbachia sp. subsp. Drosophila simulans (strain wRi)).